Reading from the N-terminus, the 187-residue chain is Ubiquinone biosynthesis protein COQ4 homolog, mitochondrial (187 aa).

Histidine 77, aspartate 78, histidine 81, and glutamate 93 together coordinate Zn(2+).

This sequence belongs to the COQ4 family. In terms of assembly, component of a multi-subunit COQ enzyme complex. Zn(2+) is required as a cofactor.

Its subcellular location is the mitochondrion inner membrane. It catalyses the reaction a 4-hydroxy-3-methoxy-5-(all-trans-polyprenyl)benzoate + H(+) = a 2-methoxy-6-(all-trans-polyprenyl)phenol + CO2. It functions in the pathway cofactor biosynthesis; ubiquinone biosynthesis. Lyase that catalyzes the C1-decarboxylation of 4-hydroxy-3-methoxy-5-(all-trans-polyprenyl)benzoic acid into 2-methoxy-6-(all-trans-polyprenyl)phenol during ubiquinone biosynthesis. This is Ubiquinone biosynthesis protein COQ4 homolog, mitochondrial from Leishmania infantum.